The primary structure comprises 652 residues: DNA mismatch repair protein MutL (652 aa).

It belongs to the DNA mismatch repair MutL/HexB family.

In terms of biological role, this protein is involved in the repair of mismatches in DNA. It is required for dam-dependent methyl-directed DNA mismatch repair. May act as a 'molecular matchmaker', a protein that promotes the formation of a stable complex between two or more DNA-binding proteins in an ATP-dependent manner without itself being part of a final effector complex. This chain is DNA mismatch repair protein MutL, found in Aliivibrio salmonicida (strain LFI1238) (Vibrio salmonicida (strain LFI1238)).